A 34-amino-acid chain; its full sequence is Putative protein YmiB (34 aa).

The helical transmembrane segment at 7 to 24 (TAAKRIVFFIYLFVIQFW) threads the bilayer.

The protein localises to the membrane. The polypeptide is Putative protein YmiB (ymiB) (Escherichia coli (strain K12)).